Reading from the N-terminus, the 346-residue chain is Methionine import ATP-binding protein MetN (346 aa).

Residues 2–243 (VRFEGISKTY…PKHPITQSFL (242 aa)) form the ABC transporter domain. An ATP-binding site is contributed by 40-47 (GRSGAGKS).

Belongs to the ABC transporter superfamily. Methionine importer (TC 3.A.1.24) family. In terms of assembly, the complex is composed of two ATP-binding proteins (MetN), two transmembrane proteins (MetI) and a solute-binding protein (MetQ).

Its subcellular location is the cell inner membrane. It carries out the reaction L-methionine(out) + ATP + H2O = L-methionine(in) + ADP + phosphate + H(+). The enzyme catalyses D-methionine(out) + ATP + H2O = D-methionine(in) + ADP + phosphate + H(+). In terms of biological role, part of the ABC transporter complex MetNIQ involved in methionine import. Responsible for energy coupling to the transport system. This is Methionine import ATP-binding protein MetN from Bradyrhizobium diazoefficiens (strain JCM 10833 / BCRC 13528 / IAM 13628 / NBRC 14792 / USDA 110).